The following is a 557-amino-acid chain: Probable WRKY transcription factor 20 (557 aa).

Residues 1 to 12 show a composition bias toward basic and acidic residues; that stretch reads MNPQANDRKEFQ. Disordered regions lie at residues 1-36 and 76-215; these read MNPQ…GGGA and KPEP…DGYN. The segment covering 95-114 has biased composition (polar residues); that stretch reads SASSSSYTGRGFHQNTFTEQ. A compositionally biased stretch (low complexity) spans 151-169; that stretch reads SSHSPSSISDAAGSSSELS. A compositionally biased stretch (polar residues) spans 193-207; it reads SIQTSQNDSRGSTPS. The segment at residues 205 to 269 is a DNA-binding region (WRKY 1); that stretch reads TPSILADDGY…YKGTHDHPKP (65 aa). Zn(2+)-binding residues include C236, C241, H264, and H266. Residues 257-348 form a disordered region; the sequence is DIIYKGTHDH…PDDDDPFSKR (92 aa). Positions 282–299 are enriched in basic and acidic residues; the sequence is QEERLDKYPSSTGRDEKG. Residues 303-314 are compositionally biased toward polar residues; sequence YNLSNPNEQTGN. Over residues 321–332 the composition is skewed to low complexity; sequence SASDDGGEAAAS. Positions 375-440 form a DNA-binding region, WRKY 2; that stretch reads SEVDILDDGY…YEGKHDHDVP (66 aa). C406, C411, H435, and H437 together coordinate Zn(2+). Disordered regions lie at residues 433–486 and 520–557; these read GKHD…QHQN and NQYG…QSGP. Over residues 520–536 the composition is skewed to polar residues; that stretch reads NQYGQRETKNETQNGDI.

This sequence belongs to the WRKY group I family.

It localises to the nucleus. Transcription factor. Interacts specifically with the W box (5'-(T)TGAC[CT]-3'), a frequently occurring elicitor-responsive cis-acting element. This chain is Probable WRKY transcription factor 20 (WRKY20), found in Arabidopsis thaliana (Mouse-ear cress).